Consider the following 878-residue polypeptide: Alanine--tRNA ligase (878 aa).

The Zn(2+) site is built by His566, His570, Cys668, and His672.

Belongs to the class-II aminoacyl-tRNA synthetase family. Zn(2+) serves as cofactor.

The protein resides in the cytoplasm. It carries out the reaction tRNA(Ala) + L-alanine + ATP = L-alanyl-tRNA(Ala) + AMP + diphosphate. Functionally, catalyzes the attachment of alanine to tRNA(Ala) in a two-step reaction: alanine is first activated by ATP to form Ala-AMP and then transferred to the acceptor end of tRNA(Ala). Also edits incorrectly charged Ser-tRNA(Ala) and Gly-tRNA(Ala) via its editing domain. The sequence is that of Alanine--tRNA ligase from Bacillus velezensis (strain DSM 23117 / BGSC 10A6 / LMG 26770 / FZB42) (Bacillus amyloliquefaciens subsp. plantarum).